The chain runs to 1033 residues: PDZ domain-containing protein 7 (1033 aa).

PDZ domains lie at 86 to 168 (SVRV…RMGR) and 210 to 293 (IVHL…ETGR). Low complexity predominate over residues 323-344 (ESSSSVSSCASSAPYSSGSLPS). 4 disordered regions span residues 323–380 (ESSS…GGRV), 444–464 (KQQR…LQRS), 754–864 (EPLS…KTVT), and 943–1033 (MELV…PRIP). The segment covering 770–784 (AQSRSRSRSRSRSRS) has biased composition (basic residues). The segment covering 785–797 (SRGQGKSPGRRSP) has biased composition (low complexity). A PDZ 3 domain is found at 862 to 934 (TVTLSKMKQS…QRAVDTIRRA (73 aa)). The span at 991–1000 (PEPPTNPQTP) shows a compositional bias: pro residues.

As to quaternary structure, homodimerizes (via PDZ2 domain). Component of USH2 complex, composed of ADGRV1, PDZD7, USH2A and WHRN. Interacts (via PDZ domains) with WHRN; the interaction is direct. Interacts with USH1G. Interacts with ADGRV1 (via the cytoplasmic region). Interacts with USH2A (via the cytoplasmic region). Interacts with MYO7A (via MyTH4-FERM domains). As to expression, weakly expressed in the inner ear. Expressed in the retinal pigment epithelium.

Its subcellular location is the cell projection. The protein resides in the cilium. It is found in the nucleus. The protein localises to the stereocilium. Its function is as follows. In cochlear developing hair cells, essential in organizing the USH2 complex at stereocilia ankle links. Blocks inhibition of adenylate cyclase activity mediated by ADGRV1. The polypeptide is PDZ domain-containing protein 7 (Homo sapiens (Human)).